Reading from the N-terminus, the 375-residue chain is MKSAASSSSSSAGSNWKALKKTLGSDASSSSASSSTNNRRKLSTSESTKPKRTRLDAKEKDAEGSKSCSPAPTSLPWFAEDISPQDLELVRESASGKMARSGEWEGIVDAKLKKQIILGGLPSDASSAKKEPGNYLAIDCEMVGVGDKGSESILARVSIVNFHGATIYDQFVRPQEKVTDYRTWVSGVRPKDLKGAPSFSQVQGEVANLIKGKVLVGHAIQNDLKALLLSHPKVLIRDTATFQPLRDLAKTKYPSLKKLAKLVLGIDIQLEGESHSSVEDARATMAVFRSQKPKWDEMLRSQNKGGRGSLARLASRSSAANKVWKAPANGQAVDAASPALDKRSMLAFTSASAVHDTVRLKPRMAAKADWWKESM.

Residues 21 to 78 (KTLGSDASSSSASSSTNNRRKLSTSESTKPKRTRLDAKEKDAEGSKSCSPAPTSLPWF) are disordered. Residues 25–35 (SDASSSSASSS) show a composition bias toward low complexity. Over residues 53 to 64 (TRLDAKEKDAEG) the composition is skewed to basic and acidic residues. An Exonuclease domain is found at 134 to 297 (NYLAIDCEMV…FRSQKPKWDE (164 aa)).

The protein belongs to the REXO4 family.

It is found in the nucleus. Its function is as follows. Exoribonuclease involved in ribosome biosynthesis. Involved in the processing of ITS1, the internal transcribed spacer localized between the 18S and 5.8S rRNAs. This chain is RNA exonuclease 4 (REX4), found in Mycosarcoma maydis (Corn smut fungus).